The primary structure comprises 208 residues: N-(5'-phosphoribosyl)anthranilate isomerase (208 aa).

It belongs to the TrpF family.

The catalysed reaction is N-(5-phospho-beta-D-ribosyl)anthranilate = 1-(2-carboxyphenylamino)-1-deoxy-D-ribulose 5-phosphate. Its pathway is amino-acid biosynthesis; L-tryptophan biosynthesis; L-tryptophan from chorismate: step 3/5. This is N-(5'-phosphoribosyl)anthranilate isomerase from Natronomonas pharaonis (strain ATCC 35678 / DSM 2160 / CIP 103997 / JCM 8858 / NBRC 14720 / NCIMB 2260 / Gabara) (Halobacterium pharaonis).